Consider the following 301-residue polypeptide: Protein FAM221A (301 aa).

The interval 235 to 271 (MHAPSTSSPQPLAGGNEVGPSTQLSSLRKPEEDDMAY) is disordered.

It belongs to the FAM221 family.

The chain is Protein FAM221A (Fam221a) from Mus musculus (Mouse).